We begin with the raw amino-acid sequence, 306 residues long: N-acetylmuramic acid 6-phosphate etherase (306 aa).

Residues 55–218 (AAATLLAGGR…STGAMIKIGK (164 aa)) form the SIS domain. E83 functions as the Proton donor in the catalytic mechanism. Residue E114 is part of the active site.

This sequence belongs to the GCKR-like family. MurNAc-6-P etherase subfamily. As to quaternary structure, homodimer.

It carries out the reaction N-acetyl-D-muramate 6-phosphate + H2O = N-acetyl-D-glucosamine 6-phosphate + (R)-lactate. Its pathway is amino-sugar metabolism; 1,6-anhydro-N-acetylmuramate degradation. The protein operates within amino-sugar metabolism; N-acetylmuramate degradation. It functions in the pathway cell wall biogenesis; peptidoglycan recycling. Its function is as follows. Specifically catalyzes the cleavage of the D-lactyl ether substituent of MurNAc 6-phosphate, producing GlcNAc 6-phosphate and D-lactate. Together with AnmK, is also required for the utilization of anhydro-N-acetylmuramic acid (anhMurNAc) either imported from the medium or derived from its own cell wall murein, and thus plays a role in cell wall recycling. This is N-acetylmuramic acid 6-phosphate etherase from Erwinia tasmaniensis (strain DSM 17950 / CFBP 7177 / CIP 109463 / NCPPB 4357 / Et1/99).